Consider the following 105-residue polypeptide: Small cysteine and glycine repeat-containing protein 4 (105 aa).

The tract at residues 4–87 (CGCGSCGGCG…RRTCGSCGCG (84 aa)) is 14 X 2 AA repeats of CG.

It belongs to the KRTAP type 28 family.

Its function is as follows. In the hair cortex, hair keratin intermediate filaments are embedded in an interfilamentous matrix, consisting of hair keratin-associated proteins (KRTAP), which are essential for the formation of a rigid and resistant hair shaft through their extensive disulfide bond cross-linking with abundant cysteine residues of hair keratins. The matrix proteins include the high-sulfur and high-glycine-tyrosine keratins. This chain is Small cysteine and glycine repeat-containing protein 4, found in Homo sapiens (Human).